A 1474-amino-acid chain; its full sequence is Alpha-2-macroglobulin (1474 aa).

The signal sequence occupies residues 1 to 23; sequence MGKNKLLHPSLVLLLLVLLPTDA. A disulfide bond links Cys48 and Cys86. Asn55, Asn70, and Asn247 each carry an N-linked (GlcNAc...) asparagine glycan. Cystine bridges form between Cys251–Cys299 and Cys269–Cys287. Asn396 and Asn410 each carry an N-linked (GlcNAc...) asparagine glycan. 8 disulfides stabilise this stretch: Cys470–Cys563, Cys595–Cys771, Cys642–Cys689, Cys821–Cys849, Cys847–Cys883, Cys921–Cys1321, Cys1079–Cys1127, and Cys1352–Cys1467. The bait region stretch occupies residues 690-728; the sequence is PQLQQYEMHGPEGLRVGFYESDVMGRGHARLVHAEEPPT. Isoglutamyl lysine isopeptide (Gln-Lys) (interchain with K-? in other proteins) cross-links involve residues Gln693 and Gln694. 3 inhibitory regions span residues 704–709, 719–723, and 730–735; these read RVGFYE, RLVHA, and TVRKYF. Asn869 carries an N-linked (GlcNAc...) asparagine glycan. Positions 972–975 form a cross-link, isoglutamyl cysteine thioester (Cys-Gln); it reads CGEQ. Residue Asn991 is glycosylated (N-linked (GlcNAc...) asparagine). Residue Asn1424 is glycosylated (N-linked (GlcNAc...) asparagine).

It belongs to the protease inhibitor I39 (alpha-2-macroglobulin) family. In terms of assembly, homotetramer; disulfide-linked. Plasma.

It is found in the secreted. Is able to inhibit all four classes of proteinases by a unique 'trapping' mechanism. This protein has a peptide stretch, called the 'bait region' which contains specific cleavage sites for different proteinases. When a proteinase cleaves the bait region, a conformational change is induced in the protein which traps the proteinase. The entrapped enzyme remains active against low molecular weight substrates (activity against high molecular weight substrates is greatly reduced). Following cleavage in the bait region a thioester bond is hydrolyzed and mediates the covalent binding of the protein to the proteinase. This Pongo abelii (Sumatran orangutan) protein is Alpha-2-macroglobulin (A2M).